Here is a 255-residue protein sequence, read N- to C-terminus: Electron transfer flavoprotein subunit beta (255 aa).

Alanine 2 is modified (N-acetylalanine). AMP-binding positions include alanine 9, 39–42, cysteine 66, and 123–134; these read NPFC and GKQAIDDDCNQT. The tract at residues 183–205 is recognition loop; the sequence is ADLRLNEPRYATLPNIMKAKKKK. Residue lysine 200 is modified to N6,N6,N6-trimethyllysine; by ETFBKMT; alternate. Lysine 200 carries the post-translational modification N6-acetyllysine; alternate. At lysine 200 the chain carries N6-methyllysine; alternate. Lysine 203 bears the N6,N6,N6-trimethyllysine; by ETFBKMT mark. Lysine 210 carries the post-translational modification N6-acetyllysine; alternate. Lysine 210 carries the N6-succinyllysine; alternate modification. Serine 223 and serine 226 each carry phosphoserine. Lysine 238 carries the N6-acetyllysine modification. N6-acetyllysine; alternate is present on lysine 248. N6-succinyllysine; alternate is present on lysine 248.

It belongs to the ETF beta-subunit/FixA family. In terms of assembly, heterodimer composed of ETFA and ETFB. Identified in a complex that contains ETFA, ETFB and ETFRF1. Interacts with ACADM. In terms of processing, methylated. Trimethylation at Lys-200 and Lys-203 may negatively regulate the activity in electron transfer from acyl-CoA dehydrogenases.

The protein localises to the mitochondrion matrix. Its function is as follows. Heterodimeric electron transfer flavoprotein that accepts electrons from several mitochondrial dehydrogenases, including acyl-CoA dehydrogenases, glutaryl-CoA and sarcosine dehydrogenase. It transfers the electrons to the main mitochondrial respiratory chain via ETF-ubiquinone oxidoreductase. Required for normal mitochondrial fatty acid oxidation and normal amino acid metabolism. ETFB binds an AMP molecule that probably has a purely structural role. In Sus scrofa (Pig), this protein is Electron transfer flavoprotein subunit beta.